Reading from the N-terminus, the 136-residue chain is T-cell receptor beta chain V region LB2 (136 aa).

Positions 1-21 are cleaved as a signal peptide; the sequence is MNKWVFCWVTLCLLTVETTHG. The v segment stretch occupies residues 22 to 116; sequence DGGIITQTPK…EMTVFLCASS (95 aa). Cys45 and Cys113 are disulfide-bonded. The segment at 117-120 is d segment; that stretch reads IRLA. The j segment stretch occupies residues 121–136; that stretch reads SAETLYFGSGTRLTVL.

This is T-cell receptor beta chain V region LB2 from Mus musculus (Mouse).